The chain runs to 135 residues: Small ribosomal subunit protein uS9 (135 aa).

Residues 107-118 (LVGDPRRTEPHK) are compositionally biased toward basic and acidic residues. The interval 107 to 135 (LVGDPRRTEPHKPNRSTKGPRAKRQKSYR) is disordered. Residues 119 to 135 (PNRSTKGPRAKRQKSYR) are compositionally biased toward basic residues.

The protein belongs to the universal ribosomal protein uS9 family. Part of the 30S ribosomal subunit.

In Pyrococcus furiosus (strain ATCC 43587 / DSM 3638 / JCM 8422 / Vc1), this protein is Small ribosomal subunit protein uS9.